The primary structure comprises 479 residues: Glutamate--tRNA ligase (479 aa).

A 'HIGH' region motif is present at residues 9–19 (PSPTGLFHIGT). The 'KMSKS' region signature appears at 248–252 (KLSKR). Lys-251 contacts ATP.

It belongs to the class-I aminoacyl-tRNA synthetase family. Glutamate--tRNA ligase type 1 subfamily. In terms of assembly, monomer.

Its subcellular location is the cytoplasm. It carries out the reaction tRNA(Glu) + L-glutamate + ATP = L-glutamyl-tRNA(Glu) + AMP + diphosphate. Its function is as follows. Catalyzes the attachment of glutamate to tRNA(Glu) in a two-step reaction: glutamate is first activated by ATP to form Glu-AMP and then transferred to the acceptor end of tRNA(Glu). The polypeptide is Glutamate--tRNA ligase (Prochlorococcus marinus (strain MIT 9215)).